A 146-amino-acid polypeptide reads, in one-letter code: Envelope protein OPG155 (146 aa).

Residues 1 to 21 form a helical; Signal-anchor for type II membrane protein membrane-spanning segment; that stretch reads MNSLSIFFIVVATAAVCLLFI. Residues 22-146 are Virion surface-facing; that stretch reads QGYSIYENYG…AECQFLKSVL (125 aa).

Belongs to the orthopoxvirus OPG155 protein family. As to quaternary structure, part of a stable entry-fusion complex (EFC) which is at least composed of proteins OPG143, OPG147, OPG155, OPG086, OPG094, OPG107, OPG104, and OPG099. Formation of the viral membrane is necessary for the assembly of the complex. Interacts directly with protein OPG107. In terms of processing, contains two intramolecular disulfide bonds. They are created by the viral disulfide bond formation pathway, a poxvirus-specific pathway that operates on the cytoplasmic side of the MV membranes.

The protein localises to the virion membrane. Functionally, envelope protein required for virus entry into host cell and for cell-cell fusion (syncytium formation). The chain is Envelope protein OPG155 (OPG155) from Ectromelia virus (strain Moscow) (ECTV).